The chain runs to 984 residues: Pro-apoptotic serine protease NMA111 (984 aa).

Residues 51-241 are serine protease; that stretch reads VVSIQFAQVA…LPLNRGKRAL (191 aa). Residues H89, D120, and S203 each act as charge relay system in the active site. 2 consecutive PDZ domains span residues 268–346 and 756–826; these read RRLG…ERNG and PEWI…VRNK.

It belongs to the peptidase S1C family.

It is found in the nucleus. Its function is as follows. Nuclear serine protease which mediates apoptosis. This is Pro-apoptotic serine protease NMA111 (NMA111) from Yarrowia lipolytica (strain CLIB 122 / E 150) (Yeast).